We begin with the raw amino-acid sequence, 432 residues long: ATP-dependent RNA helicase RhlB (432 aa).

Positions 9-37 (QNFADLGLQPQVIDGLNAKGFIKCTPIQA) match the Q motif motif. The Helicase ATP-binding domain maps to 40–219 (LPVLLAGQDI…FEHMQEPEHV (180 aa)). 53 to 60 (AQTGTGKT) is a binding site for ATP. Positions 165 to 168 (DEAD) match the DEAD box motif. Positions 245–390 (ALLQTLIEEE…QSDYDASALL (146 aa)) constitute a Helicase C-terminal domain. The disordered stretch occupies residues 397–432 (LRLQRRPQQNRRNNNGQRQGGNRKHSRPRQPRNTQS). Positions 417–426 (GNRKHSRPRQ) are enriched in basic residues.

Belongs to the DEAD box helicase family. RhlB subfamily. Component of the RNA degradosome, which is a multiprotein complex involved in RNA processing and mRNA degradation.

Its subcellular location is the cytoplasm. The catalysed reaction is ATP + H2O = ADP + phosphate + H(+). DEAD-box RNA helicase involved in RNA degradation. Has RNA-dependent ATPase activity and unwinds double-stranded RNA. The polypeptide is ATP-dependent RNA helicase RhlB (Aliivibrio fischeri (strain MJ11) (Vibrio fischeri)).